We begin with the raw amino-acid sequence, 413 residues long: Phosphopentomutase (413 aa).

Residues Asp-11, Asp-306, His-311, Asp-347, His-348, and His-359 each coordinate Mn(2+).

Belongs to the phosphopentomutase family. It depends on Mn(2+) as a cofactor.

The protein localises to the cytoplasm. The catalysed reaction is 2-deoxy-alpha-D-ribose 1-phosphate = 2-deoxy-D-ribose 5-phosphate. The enzyme catalyses alpha-D-ribose 1-phosphate = D-ribose 5-phosphate. It functions in the pathway carbohydrate degradation; 2-deoxy-D-ribose 1-phosphate degradation; D-glyceraldehyde 3-phosphate and acetaldehyde from 2-deoxy-alpha-D-ribose 1-phosphate: step 1/2. Isomerase that catalyzes the conversion of deoxy-ribose 1-phosphate (dRib-1-P) and ribose 1-phosphate (Rib-1-P) to deoxy-ribose 5-phosphate (dRib-5-P) and ribose 5-phosphate (Rib-5-P), respectively. In Helicobacter pylori (strain J99 / ATCC 700824) (Campylobacter pylori J99), this protein is Phosphopentomutase.